The following is a 457-amino-acid chain: Ribosomal protein uS12 methylthiotransferase RimO (457 aa).

One can recognise an MTTase N-terminal domain in the interval 30-140; the sequence is PTIGMVSLGC…VLDAVHGAVP (111 aa). The [4Fe-4S] cluster site is built by Cys-39, Cys-75, Cys-104, Cys-171, Cys-175, and Cys-178. The Radical SAM core domain maps to 157-386; it reads LTPRHFSYLK…MQKAQAISEA (230 aa). Residues 389-456 enclose the TRAM domain; it reads AARIGQRLEV…EYDLWGRAVL (68 aa).

The protein belongs to the methylthiotransferase family. RimO subfamily. [4Fe-4S] cluster serves as cofactor.

The protein localises to the cytoplasm. The catalysed reaction is L-aspartate(89)-[ribosomal protein uS12]-hydrogen + (sulfur carrier)-SH + AH2 + 2 S-adenosyl-L-methionine = 3-methylsulfanyl-L-aspartate(89)-[ribosomal protein uS12]-hydrogen + (sulfur carrier)-H + 5'-deoxyadenosine + L-methionine + A + S-adenosyl-L-homocysteine + 2 H(+). In terms of biological role, catalyzes the methylthiolation of an aspartic acid residue of ribosomal protein uS12. This Cereibacter sphaeroides (strain ATCC 17025 / ATH 2.4.3) (Rhodobacter sphaeroides) protein is Ribosomal protein uS12 methylthiotransferase RimO.